The sequence spans 209 residues: Adenylate kinase (209 aa).

10 to 15 (GAGKGT) is an ATP binding site. The tract at residues 30-59 (STGDLFRAAIKEQTDLGKKVKAVIDSGALV) is NMP. Residues Thr31, Arg36, 57 to 59 (ALV), 85 to 88 (GFPR), and Gln92 contribute to the AMP site. Residues 121 to 158 (GRRVCSSCGQSFHIEFVKPKKEGICDSCSGDLMIRPDD) form an LID region. Arg122 is a binding site for ATP. Residues Cys125 and Cys128 each coordinate Zn(2+). 131 to 132 (SF) lines the ATP pocket. Residues Cys145 and Cys148 each coordinate Zn(2+). Residues Arg155 and Arg166 each coordinate AMP. Position 194 (Pro194) interacts with ATP.

The protein belongs to the adenylate kinase family. As to quaternary structure, monomer.

It is found in the cytoplasm. The catalysed reaction is AMP + ATP = 2 ADP. It participates in purine metabolism; AMP biosynthesis via salvage pathway; AMP from ADP: step 1/1. Functionally, catalyzes the reversible transfer of the terminal phosphate group between ATP and AMP. Plays an important role in cellular energy homeostasis and in adenine nucleotide metabolism. The sequence is that of Adenylate kinase from Treponema denticola (strain ATCC 35405 / DSM 14222 / CIP 103919 / JCM 8153 / KCTC 15104).